A 365-amino-acid polypeptide reads, in one-letter code: Chorismate synthase (365 aa).

NADP(+)-binding residues include Arg-48 and Arg-54. FMN is bound by residues 131–133 (RSS), 243–244 (NA), Gly-288, 303–307 (KPTSS), and Arg-329.

The protein belongs to the chorismate synthase family. In terms of assembly, homotetramer. It depends on FMNH2 as a cofactor.

It carries out the reaction 5-O-(1-carboxyvinyl)-3-phosphoshikimate = chorismate + phosphate. The protein operates within metabolic intermediate biosynthesis; chorismate biosynthesis; chorismate from D-erythrose 4-phosphate and phosphoenolpyruvate: step 7/7. Its function is as follows. Catalyzes the anti-1,4-elimination of the C-3 phosphate and the C-6 proR hydrogen from 5-enolpyruvylshikimate-3-phosphate (EPSP) to yield chorismate, which is the branch point compound that serves as the starting substrate for the three terminal pathways of aromatic amino acid biosynthesis. This reaction introduces a second double bond into the aromatic ring system. The chain is Chorismate synthase from Sinorhizobium medicae (strain WSM419) (Ensifer medicae).